Reading from the N-terminus, the 90-residue chain is Probable Fe(2+)-trafficking protein (90 aa).

Belongs to the Fe(2+)-trafficking protein family.

Its function is as follows. Could be a mediator in iron transactions between iron acquisition and iron-requiring processes, such as synthesis and/or repair of Fe-S clusters in biosynthetic enzymes. The polypeptide is Probable Fe(2+)-trafficking protein (Variovorax paradoxus (strain S110)).